Reading from the N-terminus, the 264-residue chain is Thymidylate synthase (264 aa).

Arg-21 lines the dUMP pocket. His-51 is a (6R)-5,10-methylene-5,6,7,8-tetrahydrofolate binding site. Residue 126–127 coordinates dUMP; it reads RR. Cys-146 (nucleophile) is an active-site residue. DUMP contacts are provided by residues 166–169, Asn-177, and 207–209; these read RSAD and HIY. Asp-169 lines the (6R)-5,10-methylene-5,6,7,8-tetrahydrofolate pocket. Ser-263 lines the (6R)-5,10-methylene-5,6,7,8-tetrahydrofolate pocket.

Belongs to the thymidylate synthase family. Bacterial-type ThyA subfamily. As to quaternary structure, homodimer.

It is found in the cytoplasm. It catalyses the reaction dUMP + (6R)-5,10-methylene-5,6,7,8-tetrahydrofolate = 7,8-dihydrofolate + dTMP. Its pathway is pyrimidine metabolism; dTTP biosynthesis. Its function is as follows. Catalyzes the reductive methylation of 2'-deoxyuridine-5'-monophosphate (dUMP) to 2'-deoxythymidine-5'-monophosphate (dTMP) while utilizing 5,10-methylenetetrahydrofolate (mTHF) as the methyl donor and reductant in the reaction, yielding dihydrofolate (DHF) as a by-product. This enzymatic reaction provides an intracellular de novo source of dTMP, an essential precursor for DNA biosynthesis. This chain is Thymidylate synthase, found in Exiguobacterium sp. (strain ATCC BAA-1283 / AT1b).